Here is a 647-residue protein sequence, read N- to C-terminus: Carboxypeptidase Z (647 aa).

A signal peptide spans 1-18 (MVPSLLLLLTGLFRATEP). Residues 35–157 (AQKAKCVDIS…AGEEEGCFDP (123 aa)) enclose the FZ domain. Disulfide bonds link Cys-40–Cys-106, Cys-48–Cys-99, Cys-90–Cys-126, Cys-115–Cys-154, and Cys-119–Cys-143. Residues 183–499 (KHHSYSQMVS…DALLNYMEMV (317 aa)) enclose the Peptidase M14 domain. His-245 and Glu-248 together coordinate Zn(2+). N-linked (GlcNAc...) asparagine glycosylation occurs at Asn-278. His-377 lines the Zn(2+) pocket. The active-site Proton donor/acceptor is Glu-469.

The protein belongs to the peptidase M14 family. In terms of assembly, interacts with WNT4 vie its FZ domain. It depends on Zn(2+) as a cofactor. As to expression, in the early embryo it is initially expressed throughout the somites and subsequently becomes restricted to the sclerotome. Expressed in somites, paraxial head mesoderm and apical ectodermal ridge.

The protein localises to the secreted. Its subcellular location is the extracellular space. The protein resides in the extracellular matrix. Inhibited by 2-mercaptomethyl-3-guanidinoethylthiopropanoic acid (MGTA) and guanidinoethylmercaptosuccinic acid (GEMSA). Inhibited by chelating agents such as EDTA and EGTA. In terms of biological role, cleaves substrates with C-terminal arginine residues. Modulates the Wnt signaling pathway, probably by cleaving some undefined protein. Regulates the development of skeletal elements during development, probably by activating WNT4. This is Carboxypeptidase Z (CPZ) from Gallus gallus (Chicken).